A 415-amino-acid chain; its full sequence is 3-isopropylmalate dehydratase large subunit (415 aa).

[4Fe-4S] cluster is bound by residues Cys-295, Cys-353, and Cys-356.

This sequence belongs to the aconitase/IPM isomerase family. LeuC type 2 subfamily. Heterodimer of LeuC and LeuD. The cofactor is [4Fe-4S] cluster.

The catalysed reaction is (2R,3S)-3-isopropylmalate = (2S)-2-isopropylmalate. Its pathway is amino-acid biosynthesis; L-leucine biosynthesis; L-leucine from 3-methyl-2-oxobutanoate: step 2/4. Its function is as follows. Catalyzes the isomerization between 2-isopropylmalate and 3-isopropylmalate, via the formation of 2-isopropylmaleate. The protein is 3-isopropylmalate dehydratase large subunit of Pyrobaculum aerophilum (strain ATCC 51768 / DSM 7523 / JCM 9630 / CIP 104966 / NBRC 100827 / IM2).